The sequence spans 130 residues: Histone H2A type 1 (130 aa).

The interval 1-22 is disordered; sequence MSGRGKQGGKTRAKAKTRSSRA. Serine 2 bears the N-acetylserine mark. Residue serine 2 is modified to Phosphoserine. An N6-(2-hydroxyisobutyryl)lysine modification is found at lysine 6. N6-acetyllysine is present on lysine 6. The span at 7–19 shows a compositional bias: basic residues; the sequence is QGGKTRAKAKTRS. Position 10 is an N6-(2-hydroxyisobutyryl)lysine; alternate (lysine 10). The residue at position 10 (lysine 10) is an N6-lactoyllysine; alternate. The residue at position 10 (lysine 10) is an N6-succinyllysine. Glycyl lysine isopeptide (Lys-Gly) (interchain with G-Cter in ubiquitin) cross-links involve residues lysine 14 and lysine 16. At lysine 37 the chain carries N6-(2-hydroxyisobutyryl)lysine; alternate. N6-(2-hydroxyisobutyryl)lysine occurs at positions 75 and 76. Lysine 96 carries the post-translational modification N6-(2-hydroxyisobutyryl)lysine; alternate. N6-succinyllysine is present on lysine 96. Lysine 96 is subject to N6-glutaryllysine; alternate. Glutamine 105 is modified (N5-methylglutamine). Lysine 119 bears the N6-(2-hydroxyisobutyryl)lysine; alternate mark. At lysine 119 the chain carries N6-glutaryllysine; alternate. Lysine 120 is covalently cross-linked (Glycyl lysine isopeptide (Lys-Gly) (interchain with G-Cter in ubiquitin)).

It belongs to the histone H2A family. The nucleosome is a histone octamer containing two molecules each of H2A, H2B, H3 and H4 assembled in one H3-H4 heterotetramer and two H2A-H2B heterodimers. The octamer wraps approximately 147 bp of DNA. In terms of processing, monoubiquitination of Lys-120 (H2AK119Ub) gives a specific tag for epigenetic transcriptional repression. Following DNA double-strand breaks (DSBs), it is ubiquitinated through 'Lys-63' linkage of ubiquitin moieties, leading to the recruitment of repair proteins to sites of DNA damage. H2AK119Ub and ionizing radiation-induced 'Lys-63'-linked ubiquitination are distinct events. Phosphorylation on Ser-2 is enhanced during mitosis. Phosphorylation on Ser-2 directly represses transcription. Post-translationally, glutamine methylation at Gln-105 (H2AQ104me) by FBL is specifically dedicated to polymerase I. It is present at 35S ribosomal DNA locus and impairs binding of the FACT complex.

It localises to the nucleus. Its subcellular location is the chromosome. In terms of biological role, core component of nucleosome. Nucleosomes wrap and compact DNA into chromatin, limiting DNA accessibility to the cellular machineries which require DNA as a template. Histones thereby play a central role in transcription regulation, DNA repair, DNA replication and chromosomal stability. DNA accessibility is regulated via a complex set of post-translational modifications of histones, also called histone code, and nucleosome remodeling. The polypeptide is Histone H2A type 1 (Xenopus laevis (African clawed frog)).